A 281-amino-acid polypeptide reads, in one-letter code: Pantothenate synthetase (281 aa).

Met-31 to His-38 lines the ATP pocket. The active-site Proton donor is His-38. Gln-62 provides a ligand contact to (R)-pantoate. Gln-62 contributes to the beta-alanine binding site. Position 150–153 (Gly-150–Asp-153) interacts with ATP. Gln-156 is a (R)-pantoate binding site. Residues Val-179 and Met-187 to Arg-190 each bind ATP.

This sequence belongs to the pantothenate synthetase family. Homodimer.

Its subcellular location is the cytoplasm. It catalyses the reaction (R)-pantoate + beta-alanine + ATP = (R)-pantothenate + AMP + diphosphate + H(+). It functions in the pathway cofactor biosynthesis; (R)-pantothenate biosynthesis; (R)-pantothenate from (R)-pantoate and beta-alanine: step 1/1. Catalyzes the condensation of pantoate with beta-alanine in an ATP-dependent reaction via a pantoyl-adenylate intermediate. This Xylella fastidiosa (strain M23) protein is Pantothenate synthetase.